Here is a 264-residue protein sequence, read N- to C-terminus: Phycocyanobilin:ferredoxin oxidoreductase (264 aa).

This sequence belongs to the HY2 family.

It carries out the reaction (2R,3Z)-phycocyanobilin + 4 oxidized [2Fe-2S]-[ferredoxin] = biliverdin IXalpha + 4 reduced [2Fe-2S]-[ferredoxin] + 4 H(+). Functionally, catalyzes the four-electron reduction of biliverdin IX-alpha (2-electron reduction at both the A and D rings); the reaction proceeds via an isolatable 2-electron intermediate, 181,182-dihydrobiliverdin. The chain is Phycocyanobilin:ferredoxin oxidoreductase from Prochlorococcus marinus (strain MIT 9303).